Consider the following 464-residue polypeptide: Argininosuccinate lyase 2 (464 aa).

This sequence belongs to the lyase 1 family. Argininosuccinate lyase subfamily.

The protein resides in the cytoplasm. The enzyme catalyses 2-(N(omega)-L-arginino)succinate = fumarate + L-arginine. It functions in the pathway amino-acid biosynthesis; L-arginine biosynthesis; L-arginine from L-ornithine and carbamoyl phosphate: step 3/3. In Pseudomonas fluorescens (strain Pf0-1), this protein is Argininosuccinate lyase 2.